The primary structure comprises 154 residues: Probable chemoreceptor glutamine deamidase CheD (154 aa).

It belongs to the CheD family.

It carries out the reaction L-glutaminyl-[protein] + H2O = L-glutamyl-[protein] + NH4(+). Its function is as follows. Probably deamidates glutamine residues to glutamate on methyl-accepting chemotaxis receptors (MCPs), playing an important role in chemotaxis. The protein is Probable chemoreceptor glutamine deamidase CheD of Methanococcus vannielii (strain ATCC 35089 / DSM 1224 / JCM 13029 / OCM 148 / SB).